The chain runs to 342 residues: Tetraacyldisaccharide 4'-kinase (342 aa).

Position 68-75 (68-75) interacts with ATP; sequence TVGGTGKT.

The protein belongs to the LpxK family.

It carries out the reaction a lipid A disaccharide + ATP = a lipid IVA + ADP + H(+). Its pathway is glycolipid biosynthesis; lipid IV(A) biosynthesis; lipid IV(A) from (3R)-3-hydroxytetradecanoyl-[acyl-carrier-protein] and UDP-N-acetyl-alpha-D-glucosamine: step 6/6. Its function is as follows. Transfers the gamma-phosphate of ATP to the 4'-position of a tetraacyldisaccharide 1-phosphate intermediate (termed DS-1-P) to form tetraacyldisaccharide 1,4'-bis-phosphate (lipid IVA). The chain is Tetraacyldisaccharide 4'-kinase from Burkholderia ambifaria (strain ATCC BAA-244 / DSM 16087 / CCUG 44356 / LMG 19182 / AMMD) (Burkholderia cepacia (strain AMMD)).